The chain runs to 1121 residues: Brassinosteroid LRR receptor kinase BRI1 (1121 aa).

A signal peptide spans 1-24 (MDSLWAAIAALFVAAAVVVRGAAA). The Cys pair 1 signature appears at 54-61 (CRFPGAGC). LRR repeat units follow at residues 90 to 114 (LGSV…GGAR), 116 to 142 (GSKL…ALAS), 144 to 167 (CGGL…GGGG), 170 to 193 (FAGL…RWMV), 197 to 221 (VGAV…NCSG), 223 to 243 (QYLD…ALSD), 244 to 268 (CRGL…IAGL), 269 to 292 (TSLN…AFAK), 294 to 317 (QQLT…VASL), 318 to 341 (PELQ…LCQD), 343 to 367 (NSKL…VSNC), 369 to 391 (SLVS…LGDL), 392 to 415 (GNLQ…LSRI), 416 to 439 (QGLE…LAKC), 441 to 463 (KLNW…LGKL), 464 to 487 (SYLA…LGDC), and 489 to 511 (SLVW…LAKQ). N-linked (GlcNAc...) asparagine glycosylation is present at asparagine 102. Asparagine 151 is a glycosylation site (N-linked (GlcNAc...) asparagine). The N-linked (GlcNAc...) asparagine glycan is linked to asparagine 218. N-linked (GlcNAc...) asparagine glycosylation is found at asparagine 251, asparagine 275, asparagine 280, and asparagine 307. N-linked (GlcNAc...) asparagine glycans are attached at residues asparagine 366 and asparagine 381. Asparagine 473 and asparagine 501 each carry an N-linked (GlcNAc...) asparagine glycan. Tyrosine 525 is a brassinolide binding site. An LRR 18 repeat occupies 541–564 (GSLLEFTSIRPDDLSRMPSKKLCN). Asparagine 564 carries an N-linked (GlcNAc...) asparagine glycan. Tyrosine 569 is a brassinolide binding site. The N-linked (GlcNAc...) asparagine glycan is linked to asparagine 580. 4 LRR repeats span residues 580–603 (NGSM…ELGD), 604–628 (MFYL…LAEA), 629–651 (KKLA…SFSA), and 652–676 (LSLS…SLAT). N-linked (GlcNAc...) asparagine glycans are attached at residues asparagine 658, asparagine 665, and asparagine 684. The short motif at 689 to 696 (CGFPLPPC) is the Cys pair 2 element. The tract at residues 693–712 (LPPCDHSSPRSSNDHQSHRR) is disordered. The chain crosses the membrane as a helical span at residues 719–739 (SIAMGLLFSLFCIIVIIIAIG). In terms of domain architecture, Protein kinase spans 807–1083 (FHIACQIGSG…LKVMAMFKEI (277 aa)). ATP-binding positions include 813 to 821 (IGSGGFGDV), lysine 835, 881 to 883 (DYM), 887 to 890 (SLED), 933 to 938 (DMKSSN), and aspartate 951. The Proton acceptor role is filled by aspartate 933.

This sequence belongs to the protein kinase superfamily. Ser/Thr protein kinase family. In terms of assembly, interacts with BIP103 and BIP131. Interacts with BAK1. Interacts with BSK3. Interacts with SERK2. In terms of tissue distribution, highly expressed in shoots. Expressed at low levels in roots.

Its subcellular location is the cell membrane. It catalyses the reaction L-seryl-[protein] + ATP = O-phospho-L-seryl-[protein] + ADP + H(+). The enzyme catalyses L-threonyl-[protein] + ATP = O-phospho-L-threonyl-[protein] + ADP + H(+). Its function is as follows. Receptor kinase involved brassinosteroid (BR) signal transduction. Regulates, in response to BR binding, a signaling cascade involved in plant development, promotion of cell elongation and flowering. Activates BR signaling by targeting and phosphorylating BSK3, a positive regulator of BR signaling. Forms at the plasma membrane a receptor complex with BAK1 which is activated in response to brassinolide. Phosphorylates BAK1. Phosphorylates REM4.1, which reduces REM4.1 binding affinity to BAK1 and allows the formation and subsequent activation of the BRI1-BAK1 receptor complex. Functions in various growth and developmental processes, such as internode elongation, bending of the lamina joint and skotomorphogenesis. Functions in internode elongation by inducing the formation of the intercalary meristem and the longitudinal elongation of internode cells. Involved in organ development through the control of cell division and elongation. Does not seem essential for organ pattern formation or organ initiation. This is Brassinosteroid LRR receptor kinase BRI1 from Oryza sativa subsp. japonica (Rice).